Here is a 957-residue protein sequence, read N- to C-terminus: Protein CRT10 (957 aa).

The disordered stretch occupies residues 695–719 (NSTEEDDVNSDPENEESGSSLTSFQ). Over residues 697 to 710 (TEEDDVNSDPENEE) the composition is skewed to acidic residues. Ser704 is subject to Phosphoserine.

As to quaternary structure, component of a cullin-RING ligase (CRL) composed of 4 subunits: the RING protein HRT1, the cullin RTT101, a linker protein MMS1, and the substrate receptor CRT10. Interacts with MMS1.

Its function is as follows. Substrate targeting component of a cullin-RING-based E3 ubiquitin-protein ligase complex RTT101(MMS1-CRT10). RTT101(MMS1-CRT10) may regulate nucleotide synthesis through transcriptional regulation of RNR genes encoding ribonucleotide reductases. This Saccharomyces cerevisiae (strain ATCC 204508 / S288c) (Baker's yeast) protein is Protein CRT10 (CRT10).